A 136-amino-acid polypeptide reads, in one-letter code: Small ribosomal subunit protein uS19 (136 aa).

The interval 117–136 (VQHGDPGMGATRSSMFVPLK) is disordered.

It belongs to the universal ribosomal protein uS19 family.

Its function is as follows. Protein S19 forms a complex with S13 that binds strongly to the 16S ribosomal RNA. The chain is Small ribosomal subunit protein uS19 from Methanobrevibacter smithii (strain ATCC 35061 / DSM 861 / OCM 144 / PS).